We begin with the raw amino-acid sequence, 764 residues long: Palmitoyltransferase AKR1 (764 aa).

2 disordered regions span residues 1-38 and 51-71; these read MVNE…GDSN and SGNE…AEED. Topologically, residues 1 to 321 are cytoplasmic; the sequence is MVNELENVPR…IKKWFKKSQH (321 aa). Positions 10–27 are enriched in polar residues; sequence RASTLTNEEQTVDPSNND. Phosphoserine is present on residues Ser51 and Ser57. 6 ANK repeats span residues 72–102, 108–137, 142–171, 175–204, 213–242, and 246–275; these read PLLT…EVNN, EHIT…DVNA, LHAT…DPTM, QGFN…SKGL, KGRT…SIKI, and EGFT…DFFQ. A helical transmembrane segment spans residues 322 to 341; sequence AKLVTFITPFLFLGIAFALF. Topologically, residues 342-346 are lumenal; it reads SHINP. The helical transmembrane segment at 347 to 364 threads the bilayer; the sequence is LFVIIVLFLLAIATNKGL. Residues 365–384 lie on the Cytoplasmic side of the membrane; it reads NKFVLPSYGRMGVHNVTLLR. Residues 385 to 405 traverse the membrane as a helical segment; the sequence is SPLLSGVFFGTLLWVTIVWFF. The Lumenal segment spans residues 406–418; the sequence is KVMPRTFSDEQYT. A helical transmembrane segment spans residues 419-439; the sequence is NILMLVILVSVFYLFGQLVIM. The Cytoplasmic segment spans residues 440 to 513; sequence DPGCLPEETD…FNDVGLKNHK (74 aa). Residues 470-520 enclose the DHHC domain; the sequence is NFCIETWIRKPLRSKFSPLNNAVVARFDHYCPWIFNDVGLKNHKAFIFFIT. Cys500 (S-palmitoyl cysteine intermediate) is an active-site residue. The chain crosses the membrane as a helical span at residues 514 to 534; the sequence is AFIFFITLMESGIFTFLALCL. Residues 535–570 lie on the Lumenal side of the membrane; sequence EYFDELEDAHEDTSQKNGKCFILGASDLCSGLIYDR. A helical transmembrane segment spans residues 571-591; sequence FVFLILLWALLQSIWVASLIF. Residues 592–764 are Cytoplasmic-facing; it reads VQAFQICKGM…KDVEQGNDMV (173 aa).

The protein belongs to the DHHC palmitoyltransferase family. AKR/ZDHHC17 subfamily.

The protein localises to the early endosome membrane. It localises to the golgi apparatus membrane. The catalysed reaction is L-cysteinyl-[protein] + hexadecanoyl-CoA = S-hexadecanoyl-L-cysteinyl-[protein] + CoA. In terms of biological role, palmitoyltransferase specific for casein kinase 1. Palmitoylates isoforms YCK1 and YCK2 at both C-terminal cysteine residues, which is required for their proper plasma membrane localization. Required for constitutive endocytosis of a-factor receptor STE3 and both constitutive and pheromone-induced endocytosis of alpha-factor receptor STE2. The chain is Palmitoyltransferase AKR1 (AKR1) from Saccharomyces cerevisiae (strain ATCC 204508 / S288c) (Baker's yeast).